A 379-amino-acid chain; its full sequence is UDP-4-amino-4-deoxy-L-arabinose--oxoglutarate aminotransferase (379 aa).

Lys183 carries the N6-(pyridoxal phosphate)lysine modification.

It belongs to the DegT/DnrJ/EryC1 family. ArnB subfamily. Homodimer. Pyridoxal 5'-phosphate is required as a cofactor.

It carries out the reaction UDP-4-amino-4-deoxy-beta-L-arabinose + 2-oxoglutarate = UDP-beta-L-threo-pentopyranos-4-ulose + L-glutamate. The protein operates within nucleotide-sugar biosynthesis; UDP-4-deoxy-4-formamido-beta-L-arabinose biosynthesis; UDP-4-deoxy-4-formamido-beta-L-arabinose from UDP-alpha-D-glucuronate: step 2/3. Its pathway is bacterial outer membrane biogenesis; lipopolysaccharide biosynthesis. Its function is as follows. Catalyzes the conversion of UDP-4-keto-arabinose (UDP-Ara4O) to UDP-4-amino-4-deoxy-L-arabinose (UDP-L-Ara4N). The modified arabinose is attached to lipid A and is required for resistance to polymyxin and cationic antimicrobial peptides. The chain is UDP-4-amino-4-deoxy-L-arabinose--oxoglutarate aminotransferase from Pseudomonas fluorescens (strain ATCC BAA-477 / NRRL B-23932 / Pf-5).